The chain runs to 324 residues: Cytochrome c biogenesis protein CcsA (324 aa).

8 consecutive transmembrane segments (helical) span residues 17 to 37 (IISV…IPAL), 44 to 64 (GMIA…IYSG), 68 to 88 (LSNL…IHMI), 99 to 119 (YLSA…TSGL), 145 to 165 (MLLS…LLVI), 230 to 250 (VISI…VWAN), 264 to 278 (TWAF…IYSH), and 291 to 311 (AIVA…VNLL).

Belongs to the CcmF/CycK/Ccl1/NrfE/CcsA family. As to quaternary structure, may interact with Ccs1.

Its subcellular location is the plastid. It localises to the chloroplast thylakoid membrane. In terms of biological role, required during biogenesis of c-type cytochromes (cytochrome c6 and cytochrome f) at the step of heme attachment. The polypeptide is Cytochrome c biogenesis protein CcsA (Lemna minor (Common duckweed)).